Consider the following 451-residue polypeptide: Vacuolar cation/proton exchanger 1a (451 aa).

The Cytoplasmic portion of the chain corresponds to 1-58; the sequence is MEAAAAMEAGRKLAARHPHGRSRTAHNMSSSSLRKKSDAALVRKVPVAPLRPLLANLQ. The interval 9-37 is disordered; it reads AGRKLAARHPHGRSRTAHNMSSSSLRKKS. Residues 13-24 are compositionally biased toward basic residues; the sequence is LAARHPHGRSRT. Residues 59–79 traverse the membrane as a helical segment; that stretch reads EVFLATKLAVLFPAVPLAIAA. Residues 80–86 are Vacuolar-facing; that stretch reads QCFRFDQ. A helical transmembrane segment spans residues 87 to 107; it reads VWVFALSLLGLIPLAERVSFL. The Cytoplasmic segment spans residues 108-120; the sequence is TEQIALYTGPTVG. A helical membrane pass occupies residues 121–141; sequence GLLNATCGNATELIIALFALL. Residues 128-163 form a cation selection region; sequence GNATELIIALFALLKGKIEVVKCSLLGSVLSNLLLV. Over 142-153 the chain is Vacuolar; the sequence is KGKIEVVKCSLL. A helical membrane pass occupies residues 154 to 174; that stretch reads GSVLSNLLLVLGTSLFCGGVV. Over 175-191 the chain is Cytoplasmic; the sequence is NLGARQPYDRNQSDVST. The helical transmembrane segment at 192–212 threads the bilayer; that stretch reads ALLFLAVLCHSAPLLLRYAVA. At 213–228 the chain is on the vacuolar side; it reads AGEHSVSATSAAASLD. Residues 229–249 form a helical membrane-spanning segment; sequence LSRACSFVMLASYVAYLFFQL. The Cytoplasmic portion of the chain corresponds to 250-273; it reads KTHRQLFEPQEVDGGDAGDDDEEP. The chain crosses the membrane as a helical span at residues 274-294; it reads ALGFASALFWLALMTAVISVL. Residues 295 to 317 are Vacuolar-facing; that stretch reads SEYVVGTIEPTSQSWGLSVSFIS. The helical transmembrane segment at 318–338 threads the bilayer; sequence IILLPIVGNAAEHAGAIIFAL. The interval 325–360 is cation selection; it reads GNAAEHAGAIIFALKNKLDITLGVALGSATQISMFV. Over 339–352 the chain is Cytoplasmic; the sequence is KNKLDITLGVALGS. The helical transmembrane segment at 353-373 threads the bilayer; the sequence is ATQISMFVVPLSVLVAWIMGV. Over 374–378 the chain is Vacuolar; it reads QMDLD. Residues 379-399 traverse the membrane as a helical segment; sequence FKLLETGSLFMAVLVTAFTLQ. Residues 400–404 are Cytoplasmic-facing; the sequence is DGTSH. A helical membrane pass occupies residues 405-425; the sequence is YLKGILLLLCYIVIGACFFVA. The Vacuolar segment spans residues 426 to 451; it reads RQPAGHANSNGALLDVPTGSMSVQAA.

It belongs to the Ca(2+):cation antiporter (CaCA) (TC 2.A.19) family. Cation/proton exchanger (CAX) subfamily. In terms of tissue distribution, ubiquitous.

The protein localises to the vacuole membrane. Vacuolar cation/proton exchanger (CAX). Translocates Ca(2+) and other metal ions into vacuoles using the proton gradient formed by H(+)-ATPase and H(+)-pyrophosphatase. This chain is Vacuolar cation/proton exchanger 1a (CAX1a), found in Oryza sativa subsp. japonica (Rice).